We begin with the raw amino-acid sequence, 224 residues long: UPF0758 protein BLi02933/BL00636 (224 aa).

Residues 102–224 (VIRFPEDAAN…FVSLKEKGYL (123 aa)) enclose the MPN domain. Zn(2+) contacts are provided by His173, His175, and Asp186. Positions 173–186 (HNHPSGDPAPSRED) match the JAMM motif motif.

The protein belongs to the UPF0758 family.

In Bacillus licheniformis (strain ATCC 14580 / DSM 13 / JCM 2505 / CCUG 7422 / NBRC 12200 / NCIMB 9375 / NCTC 10341 / NRRL NRS-1264 / Gibson 46), this protein is UPF0758 protein BLi02933/BL00636.